We begin with the raw amino-acid sequence, 775 residues long: 5-methyltetrahydropteroyltriglutamate--homocysteine methyltransferase (775 aa).

Residues 16 to 19 and K115 contribute to the 5-methyltetrahydropteroyltri-L-glutamate site; that span reads REMK. Residues 435–437 and E488 each bind L-homocysteine; that span reads IGS. L-methionine contacts are provided by residues 435–437 and E488; that span reads IGS. Residues 519 to 520 and W565 contribute to the 5-methyltetrahydropteroyltri-L-glutamate site; that span reads RC. D603 contacts L-homocysteine. L-methionine is bound at residue D603. Position 609 (E609) interacts with 5-methyltetrahydropteroyltri-L-glutamate. Residues H645, C647, and E669 each contribute to the Zn(2+) site. The Proton donor role is filled by H698. C730 serves as a coordination point for Zn(2+).

This sequence belongs to the vitamin-B12 independent methionine synthase family. Zn(2+) is required as a cofactor.

It carries out the reaction 5-methyltetrahydropteroyltri-L-glutamate + L-homocysteine = tetrahydropteroyltri-L-glutamate + L-methionine. The protein operates within amino-acid biosynthesis; L-methionine biosynthesis via de novo pathway; L-methionine from L-homocysteine (MetE route): step 1/1. In terms of biological role, catalyzes the transfer of a methyl group from 5-methyltetrahydrofolate to homocysteine resulting in methionine formation. The polypeptide is 5-methyltetrahydropteroyltriglutamate--homocysteine methyltransferase (Coxiella burnetii (strain CbuG_Q212) (Coxiella burnetii (strain Q212))).